Reading from the N-terminus, the 426-residue chain is 3-isopropylmalate dehydratase large subunit (426 aa).

3 residues coordinate [4Fe-4S] cluster: Cys-307, Cys-367, and Cys-370.

It belongs to the aconitase/IPM isomerase family. LeuC type 2 subfamily. As to quaternary structure, heterodimer of LeuC and LeuD. Requires [4Fe-4S] cluster as cofactor.

The enzyme catalyses (2R,3S)-3-isopropylmalate = (2S)-2-isopropylmalate. It participates in amino-acid biosynthesis; L-leucine biosynthesis; L-leucine from 3-methyl-2-oxobutanoate: step 2/4. In terms of biological role, catalyzes the isomerization between 2-isopropylmalate and 3-isopropylmalate, via the formation of 2-isopropylmaleate. This chain is 3-isopropylmalate dehydratase large subunit, found in Aliarcobacter butzleri (strain RM4018) (Arcobacter butzleri).